The primary structure comprises 492 residues: Pentatricopeptide repeat-containing protein At4g21705, mitochondrial (492 aa).

The transit peptide at 1-17 (MNILRRIPANLIASRYY) directs the protein to the mitochondrion. 8 PPR repeats span residues 125–159 (NDKT…GFVT), 160–194 (SSLT…NVAP), 195–225 (DNYS…MERR), 231–261 (DWNT…SENR), 266–296 (DGEG…EKDV), 301–335 (INQD…GNCY), 336–370 (DFRV…GKAT), and 371–405 (TPES…EVGS).

The protein belongs to the PPR family. P subfamily.

The protein localises to the mitochondrion. This is Pentatricopeptide repeat-containing protein At4g21705, mitochondrial from Arabidopsis thaliana (Mouse-ear cress).